The following is a 161-amino-acid chain: Transcription elongation factor GreA (161 aa).

Residues 45–72 (NAEYHSAKEKLKLIDIQIAELNAVISKA) are a coiled coil.

It belongs to the GreA/GreB family.

Necessary for efficient RNA polymerase transcription elongation past template-encoded arresting sites. The arresting sites in DNA have the property of trapping a certain fraction of elongating RNA polymerases that pass through, resulting in locked ternary complexes. Cleavage of the nascent transcript by cleavage factors such as GreA or GreB allows the resumption of elongation from the new 3'terminus. GreA releases sequences of 2 to 3 nucleotides. This chain is Transcription elongation factor GreA, found in Aliarcobacter butzleri (strain RM4018) (Arcobacter butzleri).